A 188-amino-acid chain; its full sequence is Nicotinamide-nucleotide adenylyltransferase (188 aa).

The protein belongs to the archaeal NMN adenylyltransferase family.

The protein resides in the cytoplasm. The catalysed reaction is beta-nicotinamide D-ribonucleotide + ATP + H(+) = diphosphate + NAD(+). Its pathway is cofactor biosynthesis; NAD(+) biosynthesis; NAD(+) from nicotinamide D-ribonucleotide: step 1/1. This chain is Nicotinamide-nucleotide adenylyltransferase, found in Thermococcus kodakarensis (strain ATCC BAA-918 / JCM 12380 / KOD1) (Pyrococcus kodakaraensis (strain KOD1)).